Consider the following 232-residue polypeptide: Purine nucleoside phosphorylase DeoD-type (232 aa).

Residue His4 coordinates a purine D-ribonucleoside. Phosphate contacts are provided by residues Gly20, Arg24, Arg43, and 87–90; that span reads RIGT. A purine D-ribonucleoside contacts are provided by residues 179–181 and 203–204; these read EME and SD. The Proton donor role is filled by Asp204.

Belongs to the PNP/UDP phosphorylase family. In terms of assembly, homohexamer; trimer of homodimers.

The catalysed reaction is a purine D-ribonucleoside + phosphate = a purine nucleobase + alpha-D-ribose 1-phosphate. It carries out the reaction a purine 2'-deoxy-D-ribonucleoside + phosphate = a purine nucleobase + 2-deoxy-alpha-D-ribose 1-phosphate. Catalyzes the reversible phosphorolytic breakdown of the N-glycosidic bond in the beta-(deoxy)ribonucleoside molecules, with the formation of the corresponding free purine bases and pentose-1-phosphate. In Caldanaerobacter subterraneus subsp. tengcongensis (strain DSM 15242 / JCM 11007 / NBRC 100824 / MB4) (Thermoanaerobacter tengcongensis), this protein is Purine nucleoside phosphorylase DeoD-type.